The following is a 609-amino-acid chain: Kelch domain-containing protein 10 homolog (609 aa).

The tract at residues 103–146 (ASDLDEEEEEEDDDVDVDVDYGDTDSESEFEEMYSDEWTSSSDE) is disordered. Residues 104–137 (SDLDEEEEEEDDDVDVDVDYGDTDSESEFEEMYS) show a composition bias toward acidic residues. 6 Kelch repeats span residues 214–277 (HLYS…IHNN), 279–334 (LISH…IHKH), 335–381 (FLYT…RYRH), 389–437 (HIFV…GNRG), 458–508 (EAFI…HSDN), and 510–554 (CMYV…YNDN). The tract at residues 576–609 (LPPQRRRRLDTSQPDPSMLISLYSNPKRARSSTQ) is disordered.

As to quaternary structure, interacts with Elongin-C; may be the substrate recognition component of an E3 ubiquitin ligase complex.

In terms of biological role, activates the Pk92B/DASK1-MAPK signaling cascade. The chain is Kelch domain-containing protein 10 homolog (slim) from Drosophila melanogaster (Fruit fly).